The primary structure comprises 160 residues: Thioredoxin-like protein 4A homolog (160 aa).

The tract at residues 132 to 160 (KFLKKKKKKKNKKKQKKKIKKIKKKIKNN) is disordered. Over residues 133-160 (FLKKKKKKKNKKKQKKKIKKIKKKIKNN) the composition is skewed to basic residues.

Belongs to the DIM1 family. In terms of assembly, component of the precatalytic spliceosome (spliceosome B complex). Component of the U5 snRNP complex. Component of the U4/U6-U5 tri-snRNP complex.

The protein resides in the nucleus. In terms of biological role, plays a role in pre-mRNA splicing as component of the U5 snRNP and U4/U6-U5 tri-snRNP complexes that are involved in spliceosome assembly, and as component of the precatalytic spliceosome (spliceosome B complex). The polypeptide is Thioredoxin-like protein 4A homolog (txnl4a) (Dictyostelium discoideum (Social amoeba)).